The following is a 175-amino-acid chain: Auxin-responsive protein IAA28 (175 aa).

Residues 1 to 39 (MEEEKRLELRLAPPCHQFTSNNNINGSKQKSSTKETSFL) form a disordered region. The short motif at 7–11 (LELRL) is the EAR-like (transcriptional repression) element. Polar residues predominate over residues 17–39 (QFTSNNNINGSKQKSSTKETSFL). The PB1 domain maps to 80 to 161 (ELYVKINMEG…TVKRLHVLKT (82 aa)).

It belongs to the Aux/IAA family. Homodimers and heterodimers. Interacts with TPL. As to expression, in roots and inflorescence stems.

It is found in the nucleus. Functionally, aux/IAA proteins are short-lived transcriptional factors that function as repressors of early auxin response genes at low auxin concentrations. Repression is thought to result from the interaction with auxin response factors (ARFs), proteins that bind to the auxin-responsive promoter element (AuxRE). Formation of heterodimers with ARF proteins may alter their ability to modulate early auxin response genes expression. This chain is Auxin-responsive protein IAA28 (IAA28), found in Arabidopsis thaliana (Mouse-ear cress).